We begin with the raw amino-acid sequence, 416 residues long: 3-phosphoshikimate 1-carboxyvinyltransferase (416 aa).

Lys-20, Ser-21, and Arg-25 together coordinate 3-phosphoshikimate. Lys-20 provides a ligand contact to phosphoenolpyruvate. Phosphoenolpyruvate is bound by residues Gly-88 and Arg-116. 6 residues coordinate 3-phosphoshikimate: Ser-159, Ser-160, Gln-161, Ser-186, Asp-300, and Lys-327. Gln-161 serves as a coordination point for phosphoenolpyruvate. Catalysis depends on Asp-300, which acts as the Proton acceptor. Phosphoenolpyruvate contacts are provided by Arg-331 and Arg-373.

It belongs to the EPSP synthase family. In terms of assembly, monomer.

Its subcellular location is the cytoplasm. The catalysed reaction is 3-phosphoshikimate + phosphoenolpyruvate = 5-O-(1-carboxyvinyl)-3-phosphoshikimate + phosphate. Its pathway is metabolic intermediate biosynthesis; chorismate biosynthesis. Functionally, catalyzes the transfer of the enolpyruvyl moiety of phosphoenolpyruvate (PEP) to the 5-hydroxyl of shikimate-3-phosphate (S3P) to produce enolpyruvyl shikimate-3-phosphate and inorganic phosphate. This is 3-phosphoshikimate 1-carboxyvinyltransferase from Archaeoglobus fulgidus (strain ATCC 49558 / DSM 4304 / JCM 9628 / NBRC 100126 / VC-16).